Here is an 800-residue protein sequence, read N- to C-terminus: Calmodulin-sensitive adenylate cyclase (800 aa).

Positions 1 to 33 are cleaved as a signal peptide; sequence MTRNKFIPNKFSIISFSVLLFAISSSQAIEVNA. Residues 60–273 form the ATLF-like domain; that stretch reads KDSINNLVKT…MFEYMNKLEK (214 aa). A catalytic CA1 region spans residues 294-349; that stretch reads DVLKGEKALKASGLVPEHADAFKKIARELNTYILFRPVNKLATNLIKSGVATKGLN. The tract at residues 350 to 489 is catalytic CB; it reads VHGKSSDWGP…NVEGVLKPLT (140 aa). The Proton acceptor role is filled by H351. A catalytic CA2 region spans residues 490–622; it reads ADYDLFALAP…RFIEKNITGK (133 aa). Mg(2+)-binding residues include D491 and D493. 3',5'-cyclic AMP-binding positions include T548 and 577-579; that span reads HGT. H577 serves as a coordination point for Mg(2+). The interaction with calmodulin stretch occupies residues 623 to 800; sequence DYLYYFNRSY…EVFQKIIDEK (178 aa).

This sequence belongs to the adenylyl cyclase class-2 family. In terms of assembly, interacts (via ATLF domain) with the cleaved form of protective antigen (PA-63) anthrax toxin; interaction is required for EF translocation into the host cytoplasm. Ca(2+) is required as a cofactor.

The protein resides in the secreted. It localises to the host cytoplasm. The protein localises to the host cytosol. It carries out the reaction ATP = 3',5'-cyclic AMP + diphosphate. Host calmodulin is an absolute requirement for its activation. Inhibited by ethyl 5-aminopyrazolo[1,5-a]quinazoline-3-carboxylate. Edema factor (EF), which constitutes one of the three proteins composing the anthrax toxin, causes edema in the host. Acts as a calmodulin-dependent adenylyl cyclase by converting ATP to cAMP, leading to dramatic elevation of intracellular cAMP levels in the host, thereby causing edema. EF is not toxic by itself and only acts as an edema factor when associated with protective antigen (PA) to form the edema toxin (EdTx). Required for the survival of germinated spores within macrophages at the early stages of infection. The sequence is that of Calmodulin-sensitive adenylate cyclase (cya) from Bacillus anthracis.